Consider the following 109-residue polypeptide: Small ribosomal subunit protein bS16 (109 aa).

Residues 87 to 109 form a disordered region; the sequence is ALRETPKKSAPKAKAQERAKAAG. Positions 100-109 are enriched in basic and acidic residues; it reads KAQERAKAAG.

This sequence belongs to the bacterial ribosomal protein bS16 family.

This Rhodospirillum centenum (strain ATCC 51521 / SW) protein is Small ribosomal subunit protein bS16.